The primary structure comprises 294 residues: uncharacterized protein (294 aa).

The tract at residues 181–204 (DEPFPTTKNHNNDKRETNDKDDQQ) is disordered. Basic and acidic residues predominate over residues 190-204 (HNNDKRETNDKDDQQ).

This sequence belongs to the IIV-6 391R family.

This is an uncharacterized protein from Acheta domesticus (House cricket).